The chain runs to 283 residues: Release factor glutamine methyltransferase (283 aa).

Residues 120–124 (GTGSG), D143, F172, and N187 contribute to the S-adenosyl-L-methionine site. Position 187-190 (187-190 (NPPY)) interacts with substrate.

The protein belongs to the protein N5-glutamine methyltransferase family. PrmC subfamily.

The catalysed reaction is L-glutaminyl-[peptide chain release factor] + S-adenosyl-L-methionine = N(5)-methyl-L-glutaminyl-[peptide chain release factor] + S-adenosyl-L-homocysteine + H(+). Methylates the class 1 translation termination release factors RF1/PrfA and RF2/PrfB on the glutamine residue of the universally conserved GGQ motif. In Moorella thermoacetica (strain ATCC 39073 / JCM 9320), this protein is Release factor glutamine methyltransferase.